Consider the following 302-residue polypeptide: Succinate--CoA ligase [ADP-forming] subunit alpha (302 aa).

Residues 17 to 20, Lys43, and 96 to 98 each bind CoA; these read TGST and ITE. Tyr159 serves as a coordination point for substrate. Residue His247 is the Tele-phosphohistidine intermediate of the active site.

It belongs to the succinate/malate CoA ligase alpha subunit family. In terms of assembly, heterotetramer of two alpha and two beta subunits.

It carries out the reaction succinate + ATP + CoA = succinyl-CoA + ADP + phosphate. It catalyses the reaction GTP + succinate + CoA = succinyl-CoA + GDP + phosphate. It participates in carbohydrate metabolism; tricarboxylic acid cycle; succinate from succinyl-CoA (ligase route): step 1/1. Functionally, succinyl-CoA synthetase functions in the citric acid cycle (TCA), coupling the hydrolysis of succinyl-CoA to the synthesis of either ATP or GTP and thus represents the only step of substrate-level phosphorylation in the TCA. The alpha subunit of the enzyme binds the substrates coenzyme A and phosphate, while succinate binding and nucleotide specificity is provided by the beta subunit. The polypeptide is Succinate--CoA ligase [ADP-forming] subunit alpha (Staphylococcus epidermidis (strain ATCC 35984 / DSM 28319 / BCRC 17069 / CCUG 31568 / BM 3577 / RP62A)).